Here is a 301-residue protein sequence, read N- to C-terminus: Probable alpha-L-glutamate ligase (301 aa).

The ATP-grasp domain maps to 104–287 (LQLLSRRGVG…IASQIIAFIE (184 aa)). ATP is bound by residues Lys-141, 178–179 (EF), Asp-187, and 211–213 (RSN). Mg(2+) is bound by residues Asp-248, Glu-260, and Asn-262. Mn(2+)-binding residues include Asp-248, Glu-260, and Asn-262.

It belongs to the RimK family. It depends on Mg(2+) as a cofactor. The cofactor is Mn(2+).

This Hydrogenovibrio crunogenus (strain DSM 25203 / XCL-2) (Thiomicrospira crunogena) protein is Probable alpha-L-glutamate ligase.